The chain runs to 868 residues: Homeobox-leucine zipper protein HOX29 (868 aa).

Residues 9 to 72 (DASKYVRYTP…NRRCREKQRK (64 aa)) constitute a DNA-binding region (homeobox). Residues 64 to 106 (RRCREKQRKESSRLQALNRKLTAMNKLLMEENDRLQKQVSQLV) are a coiled coil. Residues 150–171 (VTSGHHHQQQQHNVVQPPPRDA) are disordered. The START domain occupies 169-397 (RDASPAGLMS…VAHEDTRSVI (229 aa)).

This sequence belongs to the HD-ZIP homeobox family. Class III subfamily. As to expression, expressed in phloem.

The protein localises to the nucleus. Its function is as follows. Probable transcription factor that may be necessary for the proper patterning of vascular bundles. The polypeptide is Homeobox-leucine zipper protein HOX29 (HOX29) (Oryza sativa subsp. japonica (Rice)).